Here is a 146-residue protein sequence, read N- to C-terminus: Putative ankyrin repeat protein FPV224 (146 aa).

ANK repeat units follow at residues 9–38, 42–79, 94–126, and 127–145; these read SLST…DASI, KGIT…TRDI, YVFV…RIDE, and YYYS…KAVN.

This is Putative ankyrin repeat protein FPV224 from Fowlpox virus (strain NVSL) (FPV).